The following is a 394-amino-acid chain: Argininosuccinate synthase (394 aa).

Residue 8–16 (AYSGGLDTS) coordinates ATP. The L-citrulline site is built by Y86 and S91. An ATP-binding site is contributed by G116. Residues T118, N122, and D123 each contribute to the L-aspartate site. Residue N122 participates in L-citrulline binding. R126, S172, S181, E257, and Y269 together coordinate L-citrulline.

This sequence belongs to the argininosuccinate synthase family. Type 1 subfamily. In terms of assembly, homotetramer.

Its subcellular location is the cytoplasm. It catalyses the reaction L-citrulline + L-aspartate + ATP = 2-(N(omega)-L-arginino)succinate + AMP + diphosphate + H(+). The protein operates within amino-acid biosynthesis; L-arginine biosynthesis; L-arginine from L-ornithine and carbamoyl phosphate: step 2/3. This Methanosarcina acetivorans (strain ATCC 35395 / DSM 2834 / JCM 12185 / C2A) protein is Argininosuccinate synthase.